The sequence spans 585 residues: Probable ubiquitin carboxyl-terminal hydrolase 9 (585 aa).

The segment at methionine 1–glutamate 23 is disordered. The USP domain maps to tyrosine 41–alanine 424. The active-site Nucleophile is cysteine 50. Residues cysteine 85–serine 110 form a disordered region. The active-site Proton acceptor is the histidine 375. The span at serine 447–threonine 470 shows a compositional bias: polar residues. A disordered region spans residues serine 447 to aspartate 473. Phosphoserine is present on serine 505. 2 disordered regions span residues phenylalanine 511–phenylalanine 530 and lysine 540–arginine 585. Positions phenylalanine 542 to lysine 551 are enriched in polar residues. Serine 549 carries the phosphoserine modification. The span at serine 553–histidine 570 shows a compositional bias: basic and acidic residues. Residues leucine 574–arginine 585 are compositionally biased toward polar residues.

It belongs to the peptidase C19 family. As to quaternary structure, interacts with bun107 and bun62.

Its subcellular location is the nucleus. It is found in the cytoplasm. It localises to the cell tip. The catalysed reaction is Thiol-dependent hydrolysis of ester, thioester, amide, peptide and isopeptide bonds formed by the C-terminal Gly of ubiquitin (a 76-residue protein attached to proteins as an intracellular targeting signal).. In terms of biological role, ubiquitin C-terminal hydrolase involved in regulating actin dynamics and/or endocytosis at cell tips and septa. In Schizosaccharomyces pombe (strain 972 / ATCC 24843) (Fission yeast), this protein is Probable ubiquitin carboxyl-terminal hydrolase 9 (ubp9).